Here is a 152-residue protein sequence, read N- to C-terminus: Peptide deformylase (152 aa).

Fe cation contacts are provided by C88 and H130. E131 is a catalytic residue. H134 contributes to the Fe cation binding site.

Belongs to the polypeptide deformylase family. The cofactor is Fe(2+).

It carries out the reaction N-terminal N-formyl-L-methionyl-[peptide] + H2O = N-terminal L-methionyl-[peptide] + formate. In terms of biological role, removes the formyl group from the N-terminal Met of newly synthesized proteins. Requires at least a dipeptide for an efficient rate of reaction. N-terminal L-methionine is a prerequisite for activity but the enzyme has broad specificity at other positions. This is Peptide deformylase from Syntrophomonas wolfei subsp. wolfei (strain DSM 2245B / Goettingen).